A 162-amino-acid polypeptide reads, in one-letter code: Phosphopantetheine adenylyltransferase (162 aa).

Ser-11 contributes to the substrate binding site. ATP-binding positions include 11–12 (SF) and His-19. Substrate contacts are provided by Lys-43, Leu-75, and Arg-89. ATP contacts are provided by residues 90 to 92 (GLR), Glu-100, and 125 to 131 (FSYISSS).

The protein belongs to the bacterial CoaD family. Homohexamer. Mg(2+) is required as a cofactor.

The protein resides in the cytoplasm. The catalysed reaction is (R)-4'-phosphopantetheine + ATP + H(+) = 3'-dephospho-CoA + diphosphate. The protein operates within cofactor biosynthesis; coenzyme A biosynthesis; CoA from (R)-pantothenate: step 4/5. Its function is as follows. Reversibly transfers an adenylyl group from ATP to 4'-phosphopantetheine, yielding dephospho-CoA (dPCoA) and pyrophosphate. This is Phosphopantetheine adenylyltransferase from Petrotoga mobilis (strain DSM 10674 / SJ95).